The sequence spans 147 residues: MRCPYCGNVETTVVETRESDEGDAVRRRRRCSACDKRFTTYERAELAMPAVVKKNGDRREFDREKLRASMTLALRKRNVSVDLIDAAIARIEDKVFTSGASEMSTSRIGEMVMRELKRLDKVAYVRFASVYREFEDIDAFSKLIQEI.

Residues C3–C34 fold into a zinc finger. The region spanning P49–A139 is the ATP-cone domain.

The protein belongs to the NrdR family. The cofactor is Zn(2+).

In terms of biological role, negatively regulates transcription of bacterial ribonucleotide reductase nrd genes and operons by binding to NrdR-boxes. In Leptothrix cholodnii (strain ATCC 51168 / LMG 8142 / SP-6) (Leptothrix discophora (strain SP-6)), this protein is Transcriptional repressor NrdR.